The primary structure comprises 248 residues: 5'-nucleotidase SurE (248 aa).

Residues aspartate 8, aspartate 9, serine 39, and asparagine 91 each coordinate a divalent metal cation.

The protein belongs to the SurE nucleotidase family. The cofactor is a divalent metal cation.

Its subcellular location is the cytoplasm. It catalyses the reaction a ribonucleoside 5'-phosphate + H2O = a ribonucleoside + phosphate. Its function is as follows. Nucleotidase that shows phosphatase activity on nucleoside 5'-monophosphates. The polypeptide is 5'-nucleotidase SurE (Shewanella amazonensis (strain ATCC BAA-1098 / SB2B)).